We begin with the raw amino-acid sequence, 239 residues long: Sugar fermentation stimulation protein homolog (239 aa).

The protein belongs to the SfsA family.

This is Sugar fermentation stimulation protein homolog from Rhizobium meliloti (strain 1021) (Ensifer meliloti).